The primary structure comprises 116 residues: U16-barytoxin-Tl1c (116 aa).

Positions 1–20 (MKTIIVFLSLLVLATKFGDA) are cleaved as a signal peptide. Residues 21–76 (NEGVNQEQMKEVIQNEFREDFLNEMAPMSLLQQLEAIESTLLEKEADRNSRQKRCN) constitute a propeptide that is removed on maturation. Cystine bridges form between Cys75–Cys90, Cys82–Cys95, and Cys89–Cys110.

The protein belongs to the neurotoxin 14 (magi-1) family. 06 (ICK-Trit) subfamily. In terms of tissue distribution, expressed by the venom gland.

The protein localises to the secreted. In terms of biological role, ion channel inhibitor. In Trittame loki (Brush-footed trapdoor spider), this protein is U16-barytoxin-Tl1c.